Consider the following 101-residue polypeptide: Small ribosomal subunit protein uS10 (101 aa).

The protein belongs to the universal ribosomal protein uS10 family. Part of the 30S ribosomal subunit.

In terms of biological role, involved in the binding of tRNA to the ribosomes. This is Small ribosomal subunit protein uS10 from Bacteroides fragilis (strain ATCC 25285 / DSM 2151 / CCUG 4856 / JCM 11019 / LMG 10263 / NCTC 9343 / Onslow / VPI 2553 / EN-2).